Reading from the N-terminus, the 176-residue chain is Envelope protein 167 (176 aa).

Position 1 (M1) is a topological domain, intravirion. Residues 2-22 traverse the membrane as a helical segment; that stretch reads YLVLLIAIILFITIILVIFLI. The Virion surface portion of the chain corresponds to 23–176; that stretch reads SGLFYPEQNP…AVMAIPRKVL (154 aa).

The protein belongs to the asfivirus envelope protein p22 family.

Its subcellular location is the virion membrane. The protein resides in the host cell membrane. The chain is Envelope protein 167 from African swine fever virus (isolate Warthog/Namibia/Wart80/1980) (ASFV).